The sequence spans 301 residues: Protein ARMCX6 (301 aa).

The interval 1 to 6 is mitochondrion outer membrane (MOM)-targeting sequence; sequence MGRARE. At 1–7 the chain is on the mitochondrial intermembrane side; it reads MGRAREM. Residues 8–25 form a helical; Signal-anchor membrane-spanning segment; the sequence is GWMAAGLMIGAGACYCMY. The segment at 26-36 is mitochondrion outer membrane (MOM)-targeting sequence; sequence KLTMGRSEGNE. The Cytoplasmic portion of the chain corresponds to 26–301; it reads KLTMGRSEGN…REMLVEAISP (276 aa). Residues 69–101 form a disordered region; it reads WSEDGDWDEPGAPGGTEDRRSGGGKANRAHPIK.

It belongs to the eutherian X-chromosome-specific Armcx family. As to expression, highly expressed in the developing neural tissues, neural crest derivatives and hind limbs. Also widely expressed in the adult nervous tissue, especially in the forebrain, including the cerebral cortex, hippocampus and thalamus.

The protein localises to the mitochondrion. The protein resides in the mitochondrion outer membrane. Functionally, may regulate the dynamics and distribution of mitochondria in neural cells. The protein is Protein ARMCX6 (Armcx6) of Mus musculus (Mouse).